A 476-amino-acid chain; its full sequence is Glutamyl-tRNA(Gln) amidotransferase subunit A (476 aa).

Catalysis depends on charge relay system residues K69 and S144. Catalysis depends on S168, which acts as the Acyl-ester intermediate.

The protein belongs to the amidase family. GatA subfamily. As to quaternary structure, heterotrimer of A, B and C subunits.

The catalysed reaction is L-glutamyl-tRNA(Gln) + L-glutamine + ATP + H2O = L-glutaminyl-tRNA(Gln) + L-glutamate + ADP + phosphate + H(+). Functionally, allows the formation of correctly charged Gln-tRNA(Gln) through the transamidation of misacylated Glu-tRNA(Gln) in organisms which lack glutaminyl-tRNA synthetase. The reaction takes place in the presence of glutamine and ATP through an activated gamma-phospho-Glu-tRNA(Gln). This Sulfolobus acidocaldarius (strain ATCC 33909 / DSM 639 / JCM 8929 / NBRC 15157 / NCIMB 11770) protein is Glutamyl-tRNA(Gln) amidotransferase subunit A.